A 74-amino-acid chain; its full sequence is UPF0346 protein RBAM_019500 (74 aa).

This sequence belongs to the UPF0346 family.

The sequence is that of UPF0346 protein RBAM_019500 from Bacillus velezensis (strain DSM 23117 / BGSC 10A6 / LMG 26770 / FZB42) (Bacillus amyloliquefaciens subsp. plantarum).